We begin with the raw amino-acid sequence, 460 residues long: DNA repair protein RAD57 (460 aa).

Residue 125 to 132 coordinates ATP; that stretch reads GESSTGKS.

It belongs to the RecA family.

The protein resides in the nucleus. In terms of biological role, participates in the repair of X-ray-induced damage to DNA and in meiosis. It may act in part by stabilizing a repair complex of other RAD genes. This is DNA repair protein RAD57 (RAD57) from Saccharomyces cerevisiae (strain ATCC 204508 / S288c) (Baker's yeast).